The sequence spans 156 residues: Small ribosomal subunit protein uS7 (156 aa).

It belongs to the universal ribosomal protein uS7 family. As to quaternary structure, part of the 30S ribosomal subunit. Contacts proteins S9 and S11.

Its function is as follows. One of the primary rRNA binding proteins, it binds directly to 16S rRNA where it nucleates assembly of the head domain of the 30S subunit. Is located at the subunit interface close to the decoding center, probably blocks exit of the E-site tRNA. This Campylobacter fetus subsp. fetus (strain 82-40) protein is Small ribosomal subunit protein uS7.